The following is a 778-amino-acid chain: Preasperterpenoid A synthase PvPS (778 aa).

Residues 1–414 (MAATKKSTAT…HRYNFHKPAA (414 aa)) form a terpene cyclase region. Residues aspartate 176 and aspartate 180 each contribute to the Mg(2+) site. Aspartate 176 provides a ligand contact to substrate. The DDXXD 1 signature appears at 176–180 (DDILD). Substrate contacts are provided by residues 266-269 (RVIN), asparagine 310, 314-318 (SWEKE), and 406-407 (RY). Residues 310–318 (NDYFSWEKE) carry the NSE/DTE motif. The segment covering 414–431 (AKENEDTDDEGAKSDDSK) has biased composition (basic and acidic residues). The interval 415–778 (KENEDTDDEG…LRLLLKRLQV (364 aa)) is prenyltransferase. The disordered stretch occupies residues 416–454 (ENEDTDDEGAKSDDSKTTLNDSTDSTVVDVKTPATSGLL). Positions 499, 502, and 531 each coordinate isopentenyl diphosphate. Residues aspartate 538 and aspartate 542 each contribute to the Mg(2+) site. The DDXXD 2 motif lies at 538 to 542 (DDIED). A dimethylallyl diphosphate-binding site is contributed by arginine 547. Arginine 548 contacts isopentenyl diphosphate. Lysine 625, threonine 626, glutamine 662, asparagine 669, lysine 679, and lysine 689 together coordinate dimethylallyl diphosphate.

The protein in the N-terminal section; belongs to the terpene synthase family. In the C-terminal section; belongs to the FPP/GGPP synthase family. As to quaternary structure, hexamer. Mg(2+) serves as cofactor.

The catalysed reaction is isopentenyl diphosphate + (2E,6E)-farnesyl diphosphate = (2E,6E,10E)-geranylgeranyl diphosphate + diphosphate. It catalyses the reaction isopentenyl diphosphate + (2E,6E,10E)-geranylgeranyl diphosphate = (2E,6E,10E,14E)-geranylfarnesyl diphosphate + diphosphate. The enzyme catalyses (2E,6E,10E,14E)-geranylfarnesyl diphosphate = preasperterpenoid A + diphosphate. Its pathway is secondary metabolite biosynthesis; terpenoid biosynthesis. Bifunctional sesterterpene synthase that possesses both prenyl transferase and terpene cyclase activity, converting isopentenyl diphosphate and dimethylallyl diphosphate into geranylfarnesyl diphosphate (GFPP) and further converting GFPP into preasperterpenoid A. This is Preasperterpenoid A synthase PvPS from Talaromyces verruculosus (Penicillium verruculosum).